The primary structure comprises 1381 residues: Serine-aspartate repeat-containing protein D (1381 aa).

A signal peptide spans 1 to 35 (MLNRENKTAITRKGMVSNRLNKFSIRKYTVGTASI). A YSIRK-G/S signaling motif motif is present at residues 23–34 (FSIRKYTVGTAS). A ligand binding A region region spans residues 36 to 568 (LVGTTLIFGL…NNQSGGAGQE (533 aa)). Residues 54-185 (ESTNKELNEA…NKKVDAKTES (132 aa)) are disordered. Composition is skewed to polar residues over residues 62–71 (EATTSASDNQ) and 94–108 (EMVS…SNGN). Residues 130-145 (KSDEQASPKSTNEDLN) are compositionally biased toward basic and acidic residues. 2 stretches are compositionally biased toward polar residues: residues 146 to 155 (TKQTISNQEA) and 163 to 173 (NKSVVNVQPTN). Over residues 174-183 (EENKKVDAKT) the composition is skewed to basic and acidic residues. 5 CNA-B domains span residues 569 to 680 (VYKI…IYKP), 681 to 791 (KYNL…YKTP), 792 to 901 (KYNL…FYKP), 902 to 1012 (TYNL…YKTP), and 1013 to 1123 (KYSL…EEET). 3 disordered regions span residues 857-883 (ETPS…TSTT), 972-992 (YTPT…GLTT), and 1078-1357 (EKPA…SNNA). 2 stretches are compositionally biased toward polar residues: residues 860–869 (SGYTPTQVGS) and 972–981 (YTPTSVTSGN). Acidic residues-rich tracts occupy residues 1091–1101 (TEDDKDADGGE), 1118–1134 (YYEE…DSDS), 1142–1164 (SDSD…DSDS), and 1172–1320 (SDSD…DSDS). The LPXTG sorting signal signature appears at 1344 to 1348 (LPETG). Thr-1347 is modified (pentaglycyl murein peptidoglycan amidated threonine). Residues 1348–1381 (GNENSGSNNATLFGGLFAALGSLLLFGRRKKQNK) constitute a propeptide, removed by sortase.

The protein belongs to the serine-aspartate repeat-containing protein (SDr) family. In terms of assembly, interacts with host DSG1; this interaction increases S.aureus adherence to keratinocytes.

It localises to the secreted. The protein resides in the cell wall. In terms of biological role, cell surface-associated calcium-binding protein which plays an important role in adhesion and pathogenesis. Mediates interactions with components of the extracellular matrix such as host DSG1 to promote bacterial adhesion to host cells. Contributes to the resistance to killing by innate immune components such as neutrophils present in blood and thus attenuates bacterial clearance. This is Serine-aspartate repeat-containing protein D (sdrD) from Staphylococcus aureus (strain USA300).